A 1173-amino-acid polypeptide reads, in one-letter code: Thrombospondin-1 (1173 aa).

Positions 1 to 18 (MKGIFLLLMLVMPQTHQA) are cleaved as a signal peptide. Residues 22 to 224 (GNDDNSVFDL…LQNVRFVFGT (203 aa)) form the Laminin G-like domain. The segment at 50-98 (HLVKGPDPSSPAYRIEDADLIPPLPEDKFQDLLDAIRADRGFILLATLR) is heparin-binding. N155 and N158 each carry an N-linked (GlcNAc...) asparagine glycan. C174 and C235 form a disulfide bridge. N-linked (GlcNAc...) asparagine glycans are attached at residues N250 and N363. Residues 319–376 (GVCLHNGVLHKNRDEWTVDSCTECTCQNSATICRKVSCPLMPCTNATIPDGECCPRCW) form the VWFC domain. TSP type-1 domains lie at 382 to 432 (DDDW…QDCD), 438 to 493 (DGGW…DPCP), and 495 to 550 (NGQW…QDCP). Intrachain disulfides connect C394–C426, C398–C431, C409–C416, C450–C487, C454–C492, C465–C477, C507–C544, C511–C549, C522–C534, C554–C565, C559–C575, C578–C589, C595–C611, C602–C620, C623–C647, C653–C666, C660–C679, and C681–C692. An EGF-like 1 domain is found at 550-590 (PIDGCLSNPCFAGVKCTSFIDGSWKCGSCPPGYRGNGITCK). The EGF-like 2 domain occupies 649 to 693 (PRNPCADGTHDCHKNARCIYLGHYSDPMFRCECRPGYAGNGIICG). TSP type-3 repeat units lie at residues 694 to 729 (EDTDLDGWPNENLTCVDNATYHCLKDNCPNLPNSGQ), 730 to 765 (EDYDKDGMGDACDKDDDNDGILDDRDNCQFVYNPAQ), 766 to 788 (YDYDRDDVGDRCDNCPYNHNPDQ), 789 to 824 (ADTDRNGEGDACSVDIDGDGILNERDNCAYVYNVDQ), 825 to 847 (KDTDKDGVGDQCDNCPLEHNPEQ), 848 to 885 (TDSDSDLIGDKCDNNQDIDEDGHQNNLDNCPYIPNANQ), 886 to 921 (ADHDKDGKGDACDHDDDNDGVPDDKDNCRLVPNPDQ), and 922 to 957 (TDTNGDGRGDACQYDFDDDSIPDAEDVCPENVEIST). N-linked (GlcNAc...) asparagine glycosylation is found at N705 and N711. Intrachain disulfides connect C708–C716, C721–C741, C757–C777, C780–C800, C816–C836, C839–C859, C877–C897, C913–C933, and C949–C1170. Residues 838–935 (NCPLEHNPEQ…GDGRGDACQY (98 aa)) form a disordered region. The span at 886-897 (ADHDKDGKGDAC) shows a compositional bias: basic and acidic residues. Residues 929–931 (RGD) carry the Cell attachment site motif. The TSP C-terminal domain occupies 961 to 1173 (RKFQMVPLDP…SDLKYECRDS (213 aa)). N-linked (GlcNAc...) asparagine glycosylation occurs at N1070.

Belongs to the thrombospondin family. In terms of assembly, homotrimer; disulfide-linked.

The protein localises to the secreted. It is found in the cell surface. Its subcellular location is the extracellular space. It localises to the extracellular matrix. The protein resides in the endoplasmic reticulum. The protein localises to the sarcoplasmic reticulum. Adhesive glycoprotein that mediates cell-to-cell and cell-to-matrix interactions. Can bind to fibrinogen, fibronectin, laminin, type V collagen and integrins alpha-V/beta-1, alpha-V/beta-3 and alpha-IIb/beta-3. May play a role in ER stress response. The protein is Thrombospondin-1 (thbs1) of Xenopus laevis (African clawed frog).